A 262-amino-acid chain; its full sequence is Indole-3-glycerol phosphate synthase (262 aa).

Belongs to the TrpC family.

It catalyses the reaction 1-(2-carboxyphenylamino)-1-deoxy-D-ribulose 5-phosphate + H(+) = (1S,2R)-1-C-(indol-3-yl)glycerol 3-phosphate + CO2 + H2O. Its pathway is amino-acid biosynthesis; L-tryptophan biosynthesis; L-tryptophan from chorismate: step 4/5. The chain is Indole-3-glycerol phosphate synthase from Clostridium acetobutylicum (strain ATCC 824 / DSM 792 / JCM 1419 / IAM 19013 / LMG 5710 / NBRC 13948 / NRRL B-527 / VKM B-1787 / 2291 / W).